A 719-amino-acid chain; its full sequence is MPLLFILAELAMLFARLDSEGICLHITVPQKIEPRKGGDAEGKVTYVITIDGKPYSLHLRNHSFLSQNFLVYTYNETGSLYSDSSHFLAHCHYRGYVDEVPNSIVTLSICSGLRGFLQLENVSYGIEPLESSARFEHIVYQVKSDSSMLAGNDSHVWQIDQLDKGHFNEQDKNHSQLLPQSLKLHIIVGKFLFDYMGSDIMAITQKIFQIIGLVNAMLTQLKLSVVLASLELWSDKNHISTDGNATDILQRLLDWKRDYLTLQSNEITHLLIYRRRPKYIGAASPGEICSKSYVAGVGMYPEDIGLEGFSVVITQLIGLHIGLTYDDNIRNCSCPSAPCIMQQGALSSSGKKTFSNCSLHDYMHYVSNFDTQCLGDLSNVHVLQPNQAVCGNGIMEAGEECDCGNETECQFKECCDHETCRLKGSAQCGSGACCMPTCELSASGTPCRKAVDPECDFTEYCDGSSSHCVPDTFALNGHLCRLGSAYCYNGRCQALNDQCVSLFGKGSQGASYACFEKVNSPRENLANCDSKDSYSVPCGQQDVLCGKLACFRPPKNYKSPSQSVVYSYVHDSVCLSILPGLSMRSDGRDSAYVADGTVCGPQMYCINGTCKEVNFTGNDCNATKKCKGNGICNNFGNCQCFPDYRPPDCNLQIGSPGGSIDDGNTLRTESAFATKRLSKNEDSWVILGFFIFLPFIVTFLVGIMKRNERKIVPQGEHKI.

A signal peptide spans 1–19; the sequence is MPLLFILAELAMLFARLDS. Residues 20-179 constitute a propeptide that is removed on maturation; sequence EGICLHITVP…QDKNHSQLLP (160 aa). N-linked (GlcNAc...) asparagine glycosylation is found at N61, N75, N121, N152, N173, N244, and N331. Residues 173-683 lie on the Extracellular side of the membrane; that stretch reads NHSQLLPQSL…TKRLSKNEDS (511 aa). Residues 180 to 378 form the Peptidase M12B domain; it reads QSLKLHIIVG…FDTQCLGDLS (199 aa). Intrachain disulfides connect C289/C373, C332/C357, and C334/C339. N356 and N405 each carry an N-linked (GlcNAc...) asparagine glycan. A Disintegrin domain is found at 387 to 476; sequence QAVCGNGIME…HCVPDTFALN (90 aa). A disulfide bridge links C447 with C468. N-linked (GlcNAc...) asparagine glycosylation is found at N607, N614, and N621. In terms of domain architecture, EGF-like spans 616–650; the sequence is TGNDCNATKKCKGNGICNNFGNCQCFPDYRPPDCN. 3 disulfides stabilise this stretch: C620/C632, C626/C638, and C640/C649. The helical transmembrane segment at 684 to 704 threads the bilayer; sequence WVILGFFIFLPFIVTFLVGIM. Topologically, residues 705–719 are cytoplasmic; the sequence is KRNERKIVPQGEHKI.

Post-translationally, the prodomain and the metalloprotease-like domain are cleaved during the epididymal maturation of the spermatozoa. As to expression, expressed specifically in testis.

It localises to the membrane. Its function is as follows. Sperm surface membrane protein that may be involved in spermatogenesis and fertilization. This is a non catalytic metalloprotease-like protein. This Mus musculus (Mouse) protein is Disintegrin and metalloproteinase domain-containing protein 18 (Adam18).